The sequence spans 221 residues: Probable glutathione S-transferase parC (221 aa).

The region spanning 4–83 (EEVILLDFWP…YIEEVWKDKA (80 aa)) is the GST N-terminal domain. Residues Ser14, Lys41, Ile55, and 67–68 (ES) contribute to the glutathione site. Residues 90–214 (DPYDRAQARF…PKVLEFVKVL (125 aa)) form the GST C-terminal domain.

This sequence belongs to the GST superfamily. Phi family. As to expression, abundant in seedlings and roots. It is also found in the shoot tips, flowers and leaves.

The enzyme catalyses RX + glutathione = an S-substituted glutathione + a halide anion + H(+). In terms of biological role, conjugation of reduced glutathione to a wide number of exogenous and endogenous hydrophobic electrophiles. The protein is Probable glutathione S-transferase parC (PARC) of Nicotiana tabacum (Common tobacco).